Reading from the N-terminus, the 479-residue chain is Membrane-bound lytic murein transglycosylase F (479 aa).

An N-terminal signal peptide occupies residues 1–15; sequence MKRLLLVLCYITLLA. Residues 16 to 258 form a non-LT domain region; it reads GCQKVVVEQE…HLNEKYFAHV (243 aa). Residues 260–479 form an LT domain region; the sequence is RFDYVDTRAF…QTDAIQPQQP (220 aa). Glutamate 303 is a catalytic residue. Residues 457-479 form a disordered region; sequence LQTAEAKETEEKPQTDAIQPQQP. Positions 461 to 470 are enriched in basic and acidic residues; the sequence is EAKETEEKPQ.

In the N-terminal section; belongs to the bacterial solute-binding protein 3 family. This sequence in the C-terminal section; belongs to the transglycosylase Slt family.

The protein localises to the cell outer membrane. It carries out the reaction Exolytic cleavage of the (1-&gt;4)-beta-glycosidic linkage between N-acetylmuramic acid (MurNAc) and N-acetylglucosamine (GlcNAc) residues in peptidoglycan, from either the reducing or the non-reducing ends of the peptidoglycan chains, with concomitant formation of a 1,6-anhydrobond in the MurNAc residue.. Murein-degrading enzyme that degrades murein glycan strands and insoluble, high-molecular weight murein sacculi, with the concomitant formation of a 1,6-anhydromuramoyl product. Lytic transglycosylases (LTs) play an integral role in the metabolism of the peptidoglycan (PG) sacculus. Their lytic action creates space within the PG sacculus to allow for its expansion as well as for the insertion of various structures such as secretion systems and flagella. This chain is Membrane-bound lytic murein transglycosylase F, found in Shewanella pealeana (strain ATCC 700345 / ANG-SQ1).